The following is a 143-amino-acid chain: MSLSDKDKAAVKGLWAKISPKADDIGAEALGRMLTVYPQTKTYFAHWADLSPGSGPVKKHGKVIMGAVGDAVSKIDDLVGGLAALSELHAFKLRVDPANFKILAHNVIVVIGMLYPGDFPPEVHMSVDKFFQNLALALSEKYR.

An N-acetylserine modification is found at Ser2. Residues 2 to 143 (SLSDKDKAAV…LALALSEKYR (142 aa)) enclose the Globin domain. His60 serves as a coordination point for O2. His89 provides a ligand contact to heme b.

This sequence belongs to the globin family. In terms of assembly, heterotetramer of two alpha chains and two beta chains. As to expression, red blood cells.

Involved in oxygen transport from gills to the various peripheral tissues. This Cyprinus carpio (Common carp) protein is Hemoglobin subunit alpha (hba).